Consider the following 719-residue polypeptide: Fatty acid oxidation complex subunit alpha (719 aa).

Residues 1 to 190 are enoyl-CoA hydratase/isomerase; it reads MVYQGNRITV…KLGLVDATVA (190 aa). Residue D298 coordinates substrate. The segment at 313-719 is 3-hydroxyacyl-CoA dehydrogenase; that stretch reads HDINEAAVLG…AAGETFYATA (407 aa). Residues M326, D345, 402-404, K409, and S431 contribute to the NAD(+) site; that span reads VVE. H452 (for 3-hydroxyacyl-CoA dehydrogenase activity) is an active-site residue. N455 lines the NAD(+) pocket. N502 contacts substrate.

It in the N-terminal section; belongs to the enoyl-CoA hydratase/isomerase family. This sequence in the C-terminal section; belongs to the 3-hydroxyacyl-CoA dehydrogenase family. As to quaternary structure, heterotetramer of two alpha chains (FadB) and two beta chains (FadA).

It carries out the reaction a (3S)-3-hydroxyacyl-CoA + NAD(+) = a 3-oxoacyl-CoA + NADH + H(+). The enzyme catalyses a (3S)-3-hydroxyacyl-CoA = a (2E)-enoyl-CoA + H2O. The catalysed reaction is a 4-saturated-(3S)-3-hydroxyacyl-CoA = a (3E)-enoyl-CoA + H2O. It catalyses the reaction (3S)-3-hydroxybutanoyl-CoA = (3R)-3-hydroxybutanoyl-CoA. It carries out the reaction a (3Z)-enoyl-CoA = a 4-saturated (2E)-enoyl-CoA. The enzyme catalyses a (3E)-enoyl-CoA = a 4-saturated (2E)-enoyl-CoA. It participates in lipid metabolism; fatty acid beta-oxidation. In terms of biological role, involved in the aerobic and anaerobic degradation of long-chain fatty acids via beta-oxidation cycle. Catalyzes the formation of 3-oxoacyl-CoA from enoyl-CoA via L-3-hydroxyacyl-CoA. It can also use D-3-hydroxyacyl-CoA and cis-3-enoyl-CoA as substrate. This chain is Fatty acid oxidation complex subunit alpha, found in Psychrobacter cryohalolentis (strain ATCC BAA-1226 / DSM 17306 / VKM B-2378 / K5).